Here is a 330-residue protein sequence, read N- to C-terminus: MKTAYIAKQRQISFVKSHFSRQLEERLGLIEVQAPILSRVGDGTQDNLSGCEKAVQVKVKALPDAQFEVVHSLAKWKRQTLGQHDFSAGEGLYTHMKALRPDEDRLSPLHSVYVDQWDWERVMGDGERQFSTLKSTVEAIWAGIKATEAAVSEEFGLAPFLPDQIHFVHSQELLSRYPDLDAKGRERAIAKDLGAVFLVGIGGKLSDGHRHDVRAPDYDDWSTPSELGHAGLNGDILVWNPVLEDAFELSSMGIRVDADTLKHQLALTGDEDRLELEWHQALLRGEMPQTIGGGIGQSRLTMLLLQLPHIGQVQCGVWPAAVRESVPSLL.

It belongs to the class-II aminoacyl-tRNA synthetase family. AsnA subfamily.

The protein resides in the cytoplasm. It catalyses the reaction L-aspartate + NH4(+) + ATP = L-asparagine + AMP + diphosphate + H(+). The protein operates within amino-acid biosynthesis; L-asparagine biosynthesis; L-asparagine from L-aspartate (ammonia route): step 1/1. In Escherichia coli O81 (strain ED1a), this protein is Aspartate--ammonia ligase.